The sequence spans 376 residues: MYSAISEKISETITLQRQTSSRYIEFFVFRNVDINELWTTDISEDKTHDVWPAVNKKSFKKFLENELTSYQRPIPLLGIPQNGTVSKTCKKEKQRETDCVNYERKHGNPVTFYPRHRAKRNANTDTCISEEPSILVSHHRNSKMDVFMDTNKITLVNRELIWVPHDQVRIVKLDISLYIPDGFFGVITGHSNDVFCECVTEIITDETDISVFLMNLSEHSLMLLPGDVEFSINFLPCYIPEPWEMINLSPPEFAIFHLKASREFIAKPNSYTIQYFDAMYVCADELKALMIPSKEIAKLGLLIETYIWNKDTIPSIKIFNSTRKTIYIPTGICIARIIFTCGHFCLSLMPERAINRLQVLDANSSFLFHYATSNNA.

Belongs to the dUTPase family. The cofactor is Mg(2+).

The catalysed reaction is dUTP + H2O = dUMP + diphosphate + H(+). Its function is as follows. Involved in nucleotide metabolism: produces dUMP, the immediate precursor of thymidine nucleotides and decreases the intracellular concentration of dUTP to avoid uracil incorporation into viral DNA. In Human herpesvirus 6A (strain GS) (HHV-6 variant A), this protein is Deoxyuridine 5'-triphosphate nucleotidohydrolase.